The sequence spans 504 residues: Lysine--tRNA ligase (504 aa).

Residues Glu-411 and Glu-418 each contribute to the Mg(2+) site.

The protein belongs to the class-II aminoacyl-tRNA synthetase family. As to quaternary structure, homodimer. Requires Mg(2+) as cofactor.

Its subcellular location is the cytoplasm. It catalyses the reaction tRNA(Lys) + L-lysine + ATP = L-lysyl-tRNA(Lys) + AMP + diphosphate. The sequence is that of Lysine--tRNA ligase from Clostridium botulinum (strain ATCC 19397 / Type A).